A 481-amino-acid polypeptide reads, in one-letter code: Molybdate-anion transporter (481 aa).

The next 12 helical transmembrane spans lie at 1-21, 47-67, 80-100, 131-151, 180-200, 201-221, 276-296, 306-326, 341-361, 371-391, 403-423, and 443-463; these read MFVTAYLAFIVLAGLCVALEI, LFLKAYLLALWADWLQGPYLY, IAILYVCGLASCVLFAPVAGW, FMLILGRVLGGLSTSLLTTTF, WNYGLAVGAGLVANLFAEWLG, LGPVAPFLLAIPSLAACAWFV, VMLLGGVQALFESVLYIFVFL, PPLGIVFSSLMAATMAGSTLF, LLCLAILLAFFSFFMLTFSTV, LLAFLLLELACGLYFPAVSFL, AVLAWFRLPLHLLACLGLLAL, and FAGCAGMMLAALLAVISLFTV.

This sequence belongs to the major facilitator superfamily.

It localises to the cell membrane. Its function is as follows. Mediates high-affinity intracellular uptake of the rare oligo-element molybdenum. In Danio rerio (Zebrafish), this protein is Molybdate-anion transporter (mfsd5).